Reading from the N-terminus, the 668-residue chain is Hemocyanin subunit D (668 aa).

The N-terminal stretch at M1–S22 is a signal peptide. Cu cation is bound by residues H206, H210, and H236. N322 is a glycosylation site (N-linked (GlcNAc...) asparagine). 3 residues coordinate Cu cation: H357, H361, and H397. A disulfide bridge links C567 with C614.

It belongs to the tyrosinase family. Hemocyanin subfamily. As to quaternary structure, 36-chain polymer consisting of 6 hexamers, each of which includes 4 different chains, A, B, C and D. Hemolymph.

The protein localises to the secreted. It is found in the extracellular space. Functionally, hemocyanins are copper-containing oxygen carriers occurring freely dissolved in the hemolymph of many mollusks and arthropods. The chain is Hemocyanin subunit D (HCD) from Scutigera coleoptrata (House centipede).